Reading from the N-terminus, the 222-residue chain is Collectrin (222 aa).

A signal peptide spans 1–14; it reads MLWLLFFLVTAIHA. The Extracellular segment spans residues 15–141; the sequence is ELCQPGAENA…LAPPMDPSVP (127 aa). Residues 21–222 enclose the Collectrin-like domain; sequence AENAFKVRLS…MTEDERLTPL (202 aa). N-linked (GlcNAc...) asparagine glycosylation is found at Asn-76 and Asn-93. A helical transmembrane segment spans residues 142 to 162; that stretch reads IWIIIFGVIFCIIIVAIALLI. Topologically, residues 163–222 are cytoplasmic; it reads LSGIWQRRRKNKEPSEVDDAEDKCENMITIENGIPSDPLDMKGGHINDAFMTEDERLTPL. Thr-214 and Thr-220 each carry phosphothreonine.

Belongs to the CLTRN family. In terms of assembly, monomer. Homodimer; dimerization prevents CLTRN cleavage by BACE2. Interacts with SLC6A18; this interaction regulates the trafficking of SLC6A18 to the cell membrane and its amino acid transporter activity. Interacts with SLC6A19; this interaction regulates the trafficking of SLC6A19 to the cell membrane and its amino acid transporter activity. Interacts with SNAPIN. Glycosylated. Glycosylation is required for plasma membrane localization and for its cleavage by BACE2. In terms of processing, proteolytically processed in pancreatic beta cells by BACE2 leading to the generation and extracellular release of soluble CLTRN, and a corresponding cell-associated C-terminal fragment which is later cleaved by gamma-secretase. This shedding process inactivates CLTRN. Three cleavage sites have been identified for BACE2, two clustered sites after Phe-116 and Leu-118 and a more membrane proximal site at Phe-125; the preferred BACE2 cleavage site seems to be between Phe-125 and Leu-126, Phe-116 and Leu-118 act as alternative sites. As to expression, kidney; collecting ducts. Pancreas; beta cells of islets.

It localises to the cell membrane. Functionally, plays an important role in amino acid transport by acting as binding partner of amino acid transporters SLC6A18 and SLC6A19, regulating their trafficking on the cell surface and their amino acid transporter activity. May also play a role in trafficking of amino acid transporters SLC3A1 and SLC7A9 to the renal cortical cell membrane. Regulator of SNARE complex function. Stimulator of beta cell replication. This chain is Collectrin, found in Homo sapiens (Human).